Here is a 664-residue protein sequence, read N- to C-terminus: Acid beta-fructofuranosidase 4, vacuolar (664 aa).

At methionine 1–lysine 43 the chain is on the cytoplasmic side. Positions methionine 1–proline 108 are cleaved as a propeptide — removed in mature form. 2 short sequence motifs (critical for endoplasmic reticulum export) span residues leucine 7–leucine 8 and proline 9–isoleucine 10. Residues glutamate 14–glutamate 16 carry the Critical for trafficking from the trans-Golgi network to the prevacuolar compartment and from the prevacuolar compartment to the central vacuole motif. The chain crosses the membrane as a helical; Signal-anchor for type II membrane protein span at residues glycine 44–threonine 64. Over histidine 65 to threonine 664 the chain is Lumenal. The N-linked (GlcNAc...) asparagine glycan is linked to asparagine 113. Substrate is bound by residues tryptophan 132 to aspartate 135, glutamine 151, tryptophan 159, tryptophan 194 to threonine 195, and arginine 258 to aspartate 259. Aspartate 135 is an active-site residue. Residue asparagine 280 is glycosylated (N-linked (GlcNAc...) (complex) asparagine). Substrate-binding residues include glutamate 313 and aspartate 346. N-linked (GlcNAc...) asparagine glycans are attached at residues asparagine 362 and asparagine 498. Cysteines 510 and 558 form a disulfide.

It belongs to the glycosyl hydrolase 32 family. As to quaternary structure, may be present in two forms, a 70 kDa monomer and a heterodimer of the 30 kDa and 38 kDa subunits. The ratio of the levels of the two forms within cells appears to be regulated developmentally. In terms of tissue distribution, mostly expressed in stems, roots and flowers, and, to a lower extent, in mature leaves.

It is found in the vacuole. The protein localises to the endoplasmic reticulum membrane. It localises to the golgi apparatus membrane. The protein resides in the golgi apparatus. Its subcellular location is the trans-Golgi network membrane. It is found in the prevacuolar compartment membrane. The protein localises to the vacuole membrane. It localises to the vacuole lumen. The catalysed reaction is Hydrolysis of terminal non-reducing beta-D-fructofuranoside residues in beta-D-fructofuranosides.. The protein operates within glycan biosynthesis; sucrose metabolism. Its activity is regulated as follows. Inhibited by C/VIF1 and C/VIF2. Its function is as follows. Possible role in the continued mobilization of sucrose to sink organs. Regulates root elongation. The sequence is that of Acid beta-fructofuranosidase 4, vacuolar from Arabidopsis thaliana (Mouse-ear cress).